A 512-amino-acid polypeptide reads, in one-letter code: Cytochrome P450 26B1 (512 aa).

Residue cysteine 441 participates in heme binding.

It belongs to the cytochrome P450 family. It depends on heme as a cofactor.

The protein localises to the endoplasmic reticulum membrane. It localises to the microsome membrane. The enzyme catalyses all-trans-retinoate + reduced [NADPH--hemoprotein reductase] + O2 = all-trans-4-hydroxyretinoate + oxidized [NADPH--hemoprotein reductase] + H2O + H(+). It carries out the reaction all-trans-retinoate + reduced [NADPH--hemoprotein reductase] + O2 = all-trans-18-hydroxyretinoate + oxidized [NADPH--hemoprotein reductase] + H2O + H(+). Its function is as follows. A cytochrome P450 monooxygenase involved in the metabolism of retinoates (RAs), the active metabolites of vitamin A, and critical signaling molecules in animals. RAs exist as at least four different isomers: all-trans-RA (atRA), 9-cis-RA, 13-cis-RA, and 9,13-dicis-RA, where atRA is considered to be the biologically active isomer, although 9-cis-RA and 13-cis-RA also have activity. Catalyzes the hydroxylation of atRA primarily at C-4 and C-18, thereby contributing to the regulation of atRA homeostasis and signaling. Hydroxylation of atRA limits its biological activity and initiates a degradative process leading to its eventual elimination. Involved in the convertion of atRA to all-trans-4-oxo-RA. Can oxidize all-trans-13,14-dihydroretinoate (DRA) to metabolites which could include all-trans-4-oxo-DRA, all-trans-4-hydroxy-DRA, all-trans-5,8-epoxy-DRA, and all-trans-18-hydroxy-DRA. Shows preference for the following substrates: atRA &gt; 9-cis-RA &gt; 13-cis-RA. Plays a central role in germ cell development: acts by degrading RAs in the developing testis, preventing STRA8 expression, thereby leading to delay of meiosis. Required for the maintenance of the undifferentiated state of male germ cells during embryonic development in Sertoli cells, inducing arrest in G0 phase of the cell cycle and preventing meiotic entry. Plays a role in skeletal development, both at the level of patterning and in the ossification of bone and the establishment of some synovial joints. Essential for postnatal survival. Also has a significant activity in oxidation of tazarotenic acid and may therefore metabolize that xenobiotic in vivo. The polypeptide is Cytochrome P450 26B1 (CYP26B1) (Bos taurus (Bovine)).